We begin with the raw amino-acid sequence, 53 residues long: Snake venom serine protease LmrSP-4 (53 aa).

Residues C26 and C42 are joined by a disulfide bond. Residue H41 is the Charge relay system of the active site.

Monomer. N-glycosylated. Expressed by the venom gland.

The protein resides in the secreted. Its activity is regulated as follows. Inhibited by the small molecule serine protease inhibitors phenylmethylsulfonyl fluoride (PMSF) and benzamidine. Its function is as follows. Snake venom serine protease that has fibrinogenolytic activity. Hydrolyzes the alpha-chain of fibrinogen (FGA), without affecting the beta- and the gamma-chains. Also displays hydrolytic activity towards S-2302 (plasma kallikrein substrate) and S-2251 (substrate for plasmin), but has no hydrolytic activity with S-2238 (thrombin substrate) or S-2222 (factor Xa). The protein is Snake venom serine protease LmrSP-4 of Lachesis muta rhombeata (Bushmaster).